Consider the following 308-residue polypeptide: F420-non-reducing hydrogenase subunit G (308 aa).

The protein belongs to the [NiFe]/[NiFeSe] hydrogenase small subunit family. In terms of assembly, the F420-non-reducing hydrogenase is composed of three subunits; MvhA, MvhD and MvhG. It forms a complex with the heterodisulfide reductase (hdr).

Its function is as follows. Part of a complex that provides reducing equivalents for heterodisulfide reductase. This chain is F420-non-reducing hydrogenase subunit G (mvhG), found in Methanothermobacter marburgensis (strain ATCC BAA-927 / DSM 2133 / JCM 14651 / NBRC 100331 / OCM 82 / Marburg) (Methanobacterium thermoautotrophicum).